The primary structure comprises 493 residues: Ribose import ATP-binding protein RbsA (493 aa).

ABC transporter domains follow at residues 5 to 241 and 252 to 491; these read LKIS…VGRR and EKGE…AAAI. 37–44 is a binding site for ATP; the sequence is GENGAGKS.

It belongs to the ABC transporter superfamily. Ribose importer (TC 3.A.1.2.1) family. The complex is composed of an ATP-binding protein (RbsA), two transmembrane proteins (RbsC) and a solute-binding protein (RbsB).

The protein resides in the cell inner membrane. It catalyses the reaction D-ribose(out) + ATP + H2O = D-ribose(in) + ADP + phosphate + H(+). Its function is as follows. Part of the ABC transporter complex RbsABC involved in ribose import. Responsible for energy coupling to the transport system. This chain is Ribose import ATP-binding protein RbsA, found in Haemophilus influenzae (strain ATCC 51907 / DSM 11121 / KW20 / Rd).